Here is a 187-residue protein sequence, read N- to C-terminus: Protein P18, mitochondrial (187 aa).

The N-terminal 17 residues, 1 to 17 (MRRLSSQLMCTAAAVRF), are a transit peptide targeting the mitochondrion. The tract at residues 160–187 (NAAKAKADGKEHPSTLAQQQSLFDIKIQ) is disordered.

It is found in the mitochondrion inner membrane. Functionally, putative RNA-binding protein. In Leishmania tarentolae (Sauroleishmania tarentolae), this protein is Protein P18, mitochondrial.